The sequence spans 122 residues: UPF0231 protein VP2494 (122 aa).

The protein belongs to the UPF0231 family.

The polypeptide is UPF0231 protein VP2494 (Vibrio parahaemolyticus serotype O3:K6 (strain RIMD 2210633)).